Consider the following 226-residue polypeptide: Clarin-3 (226 aa).

Residues L8–L28 form a helical membrane-spanning segment. N-linked (GlcNAc...) asparagine glycosylation is present at N46. 3 helical membrane passes run V92–F112, G128–V148, and F181–Y201.

This sequence belongs to the clarin family.

The protein resides in the membrane. The protein is Clarin-3 (Clrn3) of Mus musculus (Mouse).